The following is a 381-amino-acid chain: MGPQNRNTSFAPDLNPPQDHVSLNYSYGDYDLPLGEDEDVTKTQTFFAAKIVIGVALAGIMLVCGIGNFVFIAALARYKKLRNLTNLLIANLAISDFLVAIVCCPFEMDYYVVRQLSWAHGHVLCASVNYLRTVSLYVSTNALLAIAIDRYLAIVHPLKPRMNYQTASFLIALVWMVSILIAVPSAYFTTETILVIVKNQEKIFCGQIWSVDQQLYYKSYFLFVFGLEFVGPVVTMTLCYARISQELWFKAVPGFQTEQIRKRLRCRRKTVLLLMGILTAYVLCWAPFYGFTIVRDFFPTVVVKEKHYLTAFYVVECIAMSNSMINTICFVTVKNNTMKYFKKMLRLHWRPSHYGSKSSADLDLKTSGVPATEEVDCIRLK.

Residues 1–51 (MGPQNRNTSFAPDLNPPQDHVSLNYSYGDYDLPLGEDEDVTKTQTFFAAKI) lie on the Extracellular side of the membrane. N7 and N24 each carry an N-linked (GlcNAc...) asparagine glycan. Residues 52–72 (VIGVALAGIMLVCGIGNFVFI) form a helical membrane-spanning segment. The Cytoplasmic segment spans residues 73-86 (AALARYKKLRNLTN). Residues 87-107 (LLIANLAISDFLVAIVCCPFE) form a helical membrane-spanning segment. The Extracellular portion of the chain corresponds to 108 to 133 (MDYYVVRQLSWAHGHVLCASVNYLRT). A disulfide bond links C125 and C205. Residues 134–154 (VSLYVSTNALLAIAIDRYLAI) traverse the membrane as a helical segment. Over 155-168 (VHPLKPRMNYQTAS) the chain is Cytoplasmic. The helical transmembrane segment at 169 to 189 (FLIALVWMVSILIAVPSAYFT) threads the bilayer. Topologically, residues 190–220 (TETILVIVKNQEKIFCGQIWSVDQQLYYKSY) are extracellular. Residues 221–241 (FLFVFGLEFVGPVVTMTLCYA) traverse the membrane as a helical segment. Over 242-270 (RISQELWFKAVPGFQTEQIRKRLRCRRKT) the chain is Cytoplasmic. Residues 271–291 (VLLLMGILTAYVLCWAPFYGF) form a helical membrane-spanning segment. Over 292–310 (TIVRDFFPTVVVKEKHYLT) the chain is Extracellular. A helical membrane pass occupies residues 311-331 (AFYVVECIAMSNSMINTICFV). At 332–381 (TVKNNTMKYFKKMLRLHWRPSHYGSKSSADLDLKTSGVPATEEVDCIRLK) the chain is on the cytoplasmic side.

The protein belongs to the G-protein coupled receptor 1 family. Homodimer. As to expression, expressed in several regions of the brain, including paraventricular hypothalamic nucleus, dorsal medial hypothalamic nucleus, paratenial thalamic nuclei, paracentral thalamic nucleus, lateral habenular nucleus, lateral septal nucleus, lateral globus pallidus and amygdala. Highest expression seen in paraventricular thalamic nuclei and is also extensively expressed in the suprachiasmatic nucleus.

The protein localises to the cell membrane. Receptor for prokineticin 2. Exclusively coupled to the G(q) subclass of heteromeric G proteins. Activation leads to mobilization of calcium, stimulation of phosphoinositide turnover and activation of p44/p42 mitogen-activated protein kinase. The polypeptide is Prokineticin receptor 2 (Prokr2) (Mus musculus (Mouse)).